Consider the following 185-residue polypeptide: MARRDQLVSFLCFFLIVSAVAGGLCVSATVLPMRVGKQYVVGGRSGWRTPPPASVDLYAKWAAGIRFYVADSIEFVYKNDSVVKVDKFGYYHCNATAAAANDGSVLFLLDAPGFAYFSSADADHCKKGQRLMINVDSAPSPSPSPSPAPQEAATASAATSSSAATAAHALLLAAMAMMGLILGEW.

The first 21 residues, 1–21, serve as a signal peptide directing secretion; sequence MARRDQLVSFLCFFLIVSAVA. The Phytocyanin domain maps to 37 to 137; the sequence is KQYVVGGRSG…GQRLMINVDS (101 aa). N-linked (GlcNAc...) asparagine glycosylation is found at N79 and N94. An intrachain disulfide couples C93 to C125. Positions 136 to 155 are disordered; that stretch reads DSAPSPSPSPSPAPQEAATA. Residue S156 is the site of GPI-anchor amidated serine attachment. A propeptide spans 157–185 (removed in mature form); it reads AATSSSAATAAHALLLAAMAMMGLILGEW.

This sequence belongs to the early nodulin-like (ENODL) family. In terms of tissue distribution, expressed ubiquitously. Accumulates mainly in anthers, stigmas and ovaries.

The protein localises to the cell membrane. In terms of biological role, may act as a carbohydrate transporter. Required for male fertility and seed yield. In Oryza sativa subsp. japonica (Rice), this protein is Early nodulin-like protein 17.